The sequence spans 91 residues: Mercuric transport protein periplasmic component (91 aa).

The signal sequence occupies residues 1-19 (MKKLFASLALAAAVAPVWA). Positions 22–88 (QTVTLAVPGM…ATADAGYPSS (67 aa)) constitute an HMA domain. Hg(2+) contacts are provided by Cys33 and Cys36.

It belongs to the MerP family. In terms of assembly, monomer.

The protein resides in the periplasm. Functionally, involved in mercury resistance. Acts as a mercury scavenger that specifically binds to a mercuric ion in the periplasm and probably passes it to the cytoplasmic mercuric reductase MerA via the mercuric transport protein MerT. This is Mercuric transport protein periplasmic component from Shigella flexneri.